The primary structure comprises 483 residues: Glutamate--tRNA ligase (483 aa).

Residues 11-21 (PSPTGLLHIGN) carry the 'HIGH' region motif. The short motif at 255 to 259 (KLSKR) is the 'KMSKS' region element. Lys-258 is an ATP binding site.

This sequence belongs to the class-I aminoacyl-tRNA synthetase family. Glutamate--tRNA ligase type 1 subfamily. Monomer.

Its subcellular location is the cytoplasm. It catalyses the reaction tRNA(Glu) + L-glutamate + ATP = L-glutamyl-tRNA(Glu) + AMP + diphosphate. In terms of biological role, catalyzes the attachment of glutamate to tRNA(Glu) in a two-step reaction: glutamate is first activated by ATP to form Glu-AMP and then transferred to the acceptor end of tRNA(Glu). This chain is Glutamate--tRNA ligase, found in Lactococcus lactis subsp. cremoris (strain SK11).